Reading from the N-terminus, the 330-residue chain is Phosphate acyltransferase (330 aa).

The protein belongs to the PlsX family. As to quaternary structure, homodimer. Probably interacts with PlsY.

Its subcellular location is the cytoplasm. The enzyme catalyses a fatty acyl-[ACP] + phosphate = an acyl phosphate + holo-[ACP]. Its pathway is lipid metabolism; phospholipid metabolism. Its function is as follows. Catalyzes the reversible formation of acyl-phosphate (acyl-PO(4)) from acyl-[acyl-carrier-protein] (acyl-ACP). This enzyme utilizes acyl-ACP as fatty acyl donor, but not acyl-CoA. This Carboxydothermus hydrogenoformans (strain ATCC BAA-161 / DSM 6008 / Z-2901) protein is Phosphate acyltransferase.